We begin with the raw amino-acid sequence, 136 residues long: UPF0216 protein PF0452 (136 aa).

It belongs to the UPF0216 family.

In Pyrococcus furiosus (strain ATCC 43587 / DSM 3638 / JCM 8422 / Vc1), this protein is UPF0216 protein PF0452.